The chain runs to 339 residues: Ketol-acid reductoisomerase (NADP(+)) (339 aa).

In terms of domain architecture, KARI N-terminal Rossmann spans 1–182 (MRVYYDRDAD…GGGRSGVIET (182 aa)). Residues 24-27 (YGSQ), Arg-48, Ser-51, Thr-53, and 83-86 (DELQ) each bind NADP(+). His-108 is a catalytic residue. Gly-134 serves as a coordination point for NADP(+). Residues 183 to 328 (NFREECETDL…GRLRAMMPWI (146 aa)) enclose the KARI C-terminal knotted domain. Positions 191, 195, 227, and 231 each coordinate Mg(2+). Substrate is bound at residue Ser-252.

Belongs to the ketol-acid reductoisomerase family. Requires Mg(2+) as cofactor.

The enzyme catalyses (2R)-2,3-dihydroxy-3-methylbutanoate + NADP(+) = (2S)-2-acetolactate + NADPH + H(+). It catalyses the reaction (2R,3R)-2,3-dihydroxy-3-methylpentanoate + NADP(+) = (S)-2-ethyl-2-hydroxy-3-oxobutanoate + NADPH + H(+). It participates in amino-acid biosynthesis; L-isoleucine biosynthesis; L-isoleucine from 2-oxobutanoate: step 2/4. The protein operates within amino-acid biosynthesis; L-valine biosynthesis; L-valine from pyruvate: step 2/4. In terms of biological role, involved in the biosynthesis of branched-chain amino acids (BCAA). Catalyzes an alkyl-migration followed by a ketol-acid reduction of (S)-2-acetolactate (S2AL) to yield (R)-2,3-dihydroxy-isovalerate. In the isomerase reaction, S2AL is rearranged via a Mg-dependent methyl migration to produce 3-hydroxy-3-methyl-2-ketobutyrate (HMKB). In the reductase reaction, this 2-ketoacid undergoes a metal-dependent reduction by NADPH to yield (R)-2,3-dihydroxy-isovalerate. This chain is Ketol-acid reductoisomerase (NADP(+)), found in Phenylobacterium zucineum (strain HLK1).